The chain runs to 134 residues: Arsenate reductase (134 aa).

Catalysis depends on nucleophile residues Cys-11, Cys-83, and Cys-90. Disulfide bonds link Cys-11/Cys-83 and Cys-83/Cys-90.

This sequence belongs to the low molecular weight phosphotyrosine protein phosphatase family. Thioredoxin-coupled ArsC subfamily.

The protein resides in the cytoplasm. The enzyme catalyses arsenate + [thioredoxin]-dithiol + H(+) = arsenite + [thioredoxin]-disulfide + H2O. Its function is as follows. Catalyzes the reduction of arsenate [As(V)] to arsenite [As(III)]. In Bacillus cereus (strain 03BB102), this protein is Arsenate reductase.